A 395-amino-acid polypeptide reads, in one-letter code: Cystathionine beta-lyase MetC (395 aa).

Position 210 is an N6-(pyridoxal phosphate)lysine (Lys-210).

It belongs to the trans-sulfuration enzymes family. In terms of assembly, homotetramer; dimer of dimers. Pyridoxal 5'-phosphate is required as a cofactor.

Its subcellular location is the cytoplasm. It carries out the reaction L,L-cystathionine + H2O = L-homocysteine + pyruvate + NH4(+). The enzyme catalyses L-cysteine + H2O = hydrogen sulfide + pyruvate + NH4(+) + H(+). The catalysed reaction is an S-substituted L-cysteine + H2O = a thiol + pyruvate + NH4(+). It participates in amino-acid biosynthesis; L-methionine biosynthesis via de novo pathway; L-homocysteine from L-cystathionine: step 1/1. L-cysteine inhibits cystathionine beta-lyase activity competitively. Inhibited by aminoethoxyvinylglycine (AVG). In terms of biological role, primarily catalyzes the cleavage of cystathionine to homocysteine, pyruvate and ammonia during methionine biosynthesis. Also exhibits cysteine desulfhydrase activity, producing sulfide from cysteine. In addition, under certain growth conditions, exhibits significant alanine racemase coactivity. This chain is Cystathionine beta-lyase MetC, found in Escherichia coli (strain K12).